The chain runs to 73 residues: UPF0499 protein NFIA_054990 (73 aa).

Residues 1–20 (MKSFNLLSLSLLLAIASAAA) form the signal peptide. Cystine bridges form between cysteine 46–cysteine 60, cysteine 50–cysteine 63, and cysteine 56–cysteine 70.

The protein belongs to the UPF0499 family.

The protein localises to the secreted. The polypeptide is UPF0499 protein NFIA_054990 (Neosartorya fischeri (strain ATCC 1020 / DSM 3700 / CBS 544.65 / FGSC A1164 / JCM 1740 / NRRL 181 / WB 181) (Aspergillus fischerianus)).